The sequence spans 162 residues: Large ribosomal subunit protein bL17 (162 aa).

Residues 118–162 (RAPAAAPEAEEKGEKKAAGKAEKAPKAAKAPKAEKKPAKKAAKAE) are disordered. Residues 126 to 162 (AEEKGEKKAAGKAEKAPKAAKAPKAEKKPAKKAAKAE) are compositionally biased toward basic and acidic residues.

It belongs to the bacterial ribosomal protein bL17 family. In terms of assembly, part of the 50S ribosomal subunit. Contacts protein L32.

The polypeptide is Large ribosomal subunit protein bL17 (Anaeromyxobacter dehalogenans (strain 2CP-C)).